The following is a 473-amino-acid chain: ATP synthase subunit beta (473 aa).

153–160 contributes to the ATP binding site; sequence GGAGVGKT.

This sequence belongs to the ATPase alpha/beta chains family. In terms of assembly, F-type ATPases have 2 components, CF(1) - the catalytic core - and CF(0) - the membrane proton channel. CF(1) has five subunits: alpha(3), beta(3), gamma(1), delta(1), epsilon(1). CF(0) has three main subunits: a(1), b(2) and c(9-12). The alpha and beta chains form an alternating ring which encloses part of the gamma chain. CF(1) is attached to CF(0) by a central stalk formed by the gamma and epsilon chains, while a peripheral stalk is formed by the delta and b chains.

It localises to the cell inner membrane. The catalysed reaction is ATP + H2O + 4 H(+)(in) = ADP + phosphate + 5 H(+)(out). Functionally, produces ATP from ADP in the presence of a proton gradient across the membrane. The catalytic sites are hosted primarily by the beta subunits. In Rickettsia rickettsii (strain Iowa), this protein is ATP synthase subunit beta.